Consider the following 556-residue polypeptide: MSVSAFNRRWAAVILEALTRHGVRHICIAPGSRSTPLTLAAAENSAFIHHTHFDERGLGHLALGLAKVSKQPVAVIVTSGTAVANLYPALIEAGLTGEKLILLTADRPPELIDCGANQAIRQPGMFASHPTHSISLPRPTQDIPARWLVSTIDHALGTLHAGGVHINCPFAEPLYGEMDDTGLSWQQRLGDWWQDDKPWLREAPRLESEKQRDWFFWRQKRGVVVAGRMSAEEGKKVALWAQTLGWPLIGDVLSQTGQPLPCADLWLGNAKATSELQQAQIVVQLGSSLTGKRLLQWQASCEPEEYWIVDDIEGRLDPAHHRGRRLIANIADWLELHPAEKRQPWCVEIPRLAEQAMQAVIARRDAFGEAQLAHRISDYLPEQGQLFVGNSLVVRLIDALSQLPAGYPVYSNRGASGIDGLLSTAAGVQRASGKPTLAIVGDLSALYDLNALALLRQVSAPLVLIVVNNNGGQIFSLLPTPQSERERFYLMPQNVHFEHAAAMFELKYHHPQNWQELETAFADAWRTPTTTVIEMVVNDTDGAQTLQQLLAQVSHL.

The protein belongs to the TPP enzyme family. MenD subfamily. In terms of assembly, homodimer. Mg(2+) serves as cofactor. Mn(2+) is required as a cofactor. The cofactor is thiamine diphosphate.

The catalysed reaction is isochorismate + 2-oxoglutarate + H(+) = 5-enolpyruvoyl-6-hydroxy-2-succinyl-cyclohex-3-ene-1-carboxylate + CO2. The protein operates within quinol/quinone metabolism; 1,4-dihydroxy-2-naphthoate biosynthesis; 1,4-dihydroxy-2-naphthoate from chorismate: step 2/7. It functions in the pathway quinol/quinone metabolism; menaquinone biosynthesis. Functionally, catalyzes the thiamine diphosphate-dependent decarboxylation of 2-oxoglutarate and the subsequent addition of the resulting succinic semialdehyde-thiamine pyrophosphate anion to isochorismate to yield 2-succinyl-5-enolpyruvyl-6-hydroxy-3-cyclohexene-1-carboxylate (SEPHCHC). This Shigella flexneri serotype 5b (strain 8401) protein is 2-succinyl-5-enolpyruvyl-6-hydroxy-3-cyclohexene-1-carboxylate synthase.